The primary structure comprises 157 residues: Phosphopantetheine adenylyltransferase (157 aa).

Thr10 is a substrate binding site. ATP contacts are provided by residues 10-11 (TF) and His18. Substrate contacts are provided by Lys42, Leu74, and Arg88. ATP-binding positions include 89-91 (GLR), Glu99, and 124-130 (NAFISSS).

The protein belongs to the bacterial CoaD family. As to quaternary structure, homohexamer. Requires Mg(2+) as cofactor.

It localises to the cytoplasm. It catalyses the reaction (R)-4'-phosphopantetheine + ATP + H(+) = 3'-dephospho-CoA + diphosphate. It participates in cofactor biosynthesis; coenzyme A biosynthesis; CoA from (R)-pantothenate: step 4/5. Functionally, reversibly transfers an adenylyl group from ATP to 4'-phosphopantetheine, yielding dephospho-CoA (dPCoA) and pyrophosphate. This chain is Phosphopantetheine adenylyltransferase, found in Helicobacter acinonychis (strain Sheeba).